The primary structure comprises 67 residues: Bowman-Birk type major trypsin inhibitor (67 aa).

5 disulfide bridges follow: Cys8/Cys63, Cys9/Cys24, Cys14/Cys22, Cys31/Cys38, and Cys35/Cys51.

This sequence belongs to the Bowman-Birk serine protease inhibitor family.

The sequence is that of Bowman-Birk type major trypsin inhibitor from Setaria italica (Foxtail millet).